The sequence spans 308 residues: uncharacterized protein (308 aa).

An N-terminal signal peptide occupies residues 1–18 (MKIILLFLAALASFTVHA).

This is an uncharacterized protein from Escherichia coli (strain K12).